The following is a 383-amino-acid chain: Chaperone protein DnaJ (383 aa).

A J domain is found at 6–70 (DYYDVLGVGR…QKRAAYDQYG (65 aa)). The segment at 140–222 (GKETKISYSR…CHGTGREEER (83 aa)) adopts a CR-type zinc-finger fold. Residues cysteine 153, cysteine 156, cysteine 170, cysteine 173, cysteine 196, cysteine 199, cysteine 210, and cysteine 213 each coordinate Zn(2+). 4 CXXCXGXG motif repeats span residues 153-160 (CHTCHGSG), 170-177 (CHKCHGAG), 196-203 (CDVCGGTG), and 210-217 (CDTCHGTG).

This sequence belongs to the DnaJ family. As to quaternary structure, homodimer. It depends on Zn(2+) as a cofactor.

It localises to the cytoplasm. Its function is as follows. Participates actively in the response to hyperosmotic and heat shock by preventing the aggregation of stress-denatured proteins and by disaggregating proteins, also in an autonomous, DnaK-independent fashion. Unfolded proteins bind initially to DnaJ; upon interaction with the DnaJ-bound protein, DnaK hydrolyzes its bound ATP, resulting in the formation of a stable complex. GrpE releases ADP from DnaK; ATP binding to DnaK triggers the release of the substrate protein, thus completing the reaction cycle. Several rounds of ATP-dependent interactions between DnaJ, DnaK and GrpE are required for fully efficient folding. Also involved, together with DnaK and GrpE, in the DNA replication of plasmids through activation of initiation proteins. This is Chaperone protein DnaJ from Latilactobacillus sakei (Lactobacillus sakei).